The primary structure comprises 335 residues: GTPase Obg (335 aa).

The Obg domain maps to Met-1–Ile-158. The region spanning Ala-159–Ala-334 is the OBG-type G domain. GTP contacts are provided by residues Gly-165–Ser-172, Phe-190–Gln-194, Asp-215–Gly-218, Asn-285–Asp-288, and Ser-315–Leu-317. The Mg(2+) site is built by Ser-172 and Thr-192.

This sequence belongs to the TRAFAC class OBG-HflX-like GTPase superfamily. OBG GTPase family. As to quaternary structure, monomer. Mg(2+) serves as cofactor.

The protein resides in the cytoplasm. Its function is as follows. An essential GTPase (4.1 pmol GTP/min). Cannot substitute endogenous obg in E.coli, has a partially dominant-negative phenotype upon overexpression in liquid culture leading to decreased growth rate in a concentration-dependent fashion, with 50% of cells being elongated. Binds GTP, GDP and possibly (p)ppGpp with moderate affinity, with high nucleotide exchange rates and a fairly low GTP hydrolysis rate. It may play a role in control of the cell cycle, stress response, ribosome biogenesis and in those bacteria that undergo differentiation, in morphogenesis control. This is GTPase Obg from Chlamydia abortus (strain DSM 27085 / S26/3) (Chlamydophila abortus).